A 100-amino-acid polypeptide reads, in one-letter code: UPF0213 protein YhbQ (100 aa).

Positions 2-77 (TPWFLYLIRT…KQLTKRQKER (76 aa)) constitute a GIY-YIG domain.

The protein belongs to the UPF0213 family.

The protein is UPF0213 protein YhbQ of Escherichia coli O81 (strain ED1a).